A 295-amino-acid polypeptide reads, in one-letter code: Small ribosomal subunit protein uS2 (295 aa).

Residues 260 to 295 are disordered; it reads KQAKKFSKTKNIDEETNTEFEQALNDADENKNSDNA.

This sequence belongs to the universal ribosomal protein uS2 family.

This Rickettsia felis (strain ATCC VR-1525 / URRWXCal2) (Rickettsia azadi) protein is Small ribosomal subunit protein uS2.